An 82-amino-acid polypeptide reads, in one-letter code: RNA-binding protein Hfq (82 aa).

Residues 10–69 (DPFLNALRREHVPVSIYLVNGIKLQGQIESFDQYVVLLRNTVTQMVYKHAISTIVPGRAV) form the Sm domain.

This sequence belongs to the Hfq family. Homohexamer.

Its function is as follows. RNA chaperone that binds small regulatory RNA (sRNAs) and mRNAs to facilitate mRNA translational regulation in response to envelope stress, environmental stress and changes in metabolite concentrations. Also binds with high specificity to tRNAs. The sequence is that of RNA-binding protein Hfq from Albidiferax ferrireducens (strain ATCC BAA-621 / DSM 15236 / T118) (Rhodoferax ferrireducens).